Here is a 503-residue protein sequence, read N- to C-terminus: Arginyl-tRNA--protein transferase 1 (503 aa).

This sequence belongs to the R-transferase family.

It is found in the cytoplasm. The catalysed reaction is an N-terminal L-alpha-aminoacyl-[protein] + L-arginyl-tRNA(Arg) = an N-terminal L-arginyl-L-aminoacyl-[protein] + tRNA(Arg) + H(+). Its function is as follows. Involved in the post-translational conjugation of arginine to the N-terminal aspartate or glutamate of a protein. This arginylation is required for degradation of the protein via the ubiquitin pathway. Does not arginylate cysteine residues. The chain is Arginyl-tRNA--protein transferase 1 (ATE1) from Saccharomyces cerevisiae (strain ATCC 204508 / S288c) (Baker's yeast).